Consider the following 199-residue polypeptide: MAADSAPMNLTHHFLIAMPGMEDKTFNRSVVYLCEHSERGALGLVINKPSDINLKVLFEKIELHLSRPELGDAPVFQGGPVQTERGFVLHEPVFTHAEKPEESVYASTMTIPGGLEMTTSKDVLEALATGAGPRKVLVSLGYSAWGEGQLESELAENSWLTVGADPAVIFDTPVEQRYDRALLLLGLEAWKLSPEAGHA.

The protein belongs to the UPF0301 (AlgH) family.

The sequence is that of UPF0301 protein Vapar_4617 from Variovorax paradoxus (strain S110).